The following is a 634-amino-acid chain: Threonine--tRNA ligase (634 aa).

The TGS domain maps to 1 to 61 (MINITLPDGS…DHDASLRIIT (61 aa)). Residues 243–534 (DHRRIGKAQD…LIEHHAGAFP (292 aa)) are catalytic. Zn(2+) is bound by residues C334, H385, and H511.

It belongs to the class-II aminoacyl-tRNA synthetase family. In terms of assembly, homodimer. Zn(2+) is required as a cofactor.

It is found in the cytoplasm. The catalysed reaction is tRNA(Thr) + L-threonine + ATP = L-threonyl-tRNA(Thr) + AMP + diphosphate + H(+). Catalyzes the attachment of threonine to tRNA(Thr) in a two-step reaction: L-threonine is first activated by ATP to form Thr-AMP and then transferred to the acceptor end of tRNA(Thr). Also edits incorrectly charged L-seryl-tRNA(Thr). The polypeptide is Threonine--tRNA ligase (Xanthomonas euvesicatoria pv. vesicatoria (strain 85-10) (Xanthomonas campestris pv. vesicatoria)).